Reading from the N-terminus, the 111-residue chain is Large ribosomal subunit protein uL23 (111 aa).

The protein belongs to the universal ribosomal protein uL23 family. In terms of assembly, part of the 50S ribosomal subunit. Contacts protein L29, and trigger factor when it is bound to the ribosome.

Its function is as follows. One of the early assembly proteins it binds 23S rRNA. One of the proteins that surrounds the polypeptide exit tunnel on the outside of the ribosome. Forms the main docking site for trigger factor binding to the ribosome. In Chlamydia trachomatis serovar A (strain ATCC VR-571B / DSM 19440 / HAR-13), this protein is Large ribosomal subunit protein uL23.